The sequence spans 123 residues: Large ribosomal subunit protein uL14 (123 aa).

This sequence belongs to the universal ribosomal protein uL14 family. Part of the 50S ribosomal subunit. Forms a cluster with proteins L3 and L19. In the 70S ribosome, L14 and L19 interact and together make contacts with the 16S rRNA in bridges B5 and B8.

Binds to 23S rRNA. Forms part of two intersubunit bridges in the 70S ribosome. In Aliivibrio salmonicida (strain LFI1238) (Vibrio salmonicida (strain LFI1238)), this protein is Large ribosomal subunit protein uL14.